The following is a 466-amino-acid chain: Glutamate--tRNA ligase (466 aa).

The 'HIGH' region signature appears at 11–21 (PSPTGFIHLGN). The 'KMSKS' region motif lies at 243-247 (KMSKR). ATP is bound at residue Lys246.

This sequence belongs to the class-I aminoacyl-tRNA synthetase family. Glutamate--tRNA ligase type 1 subfamily. Monomer.

It is found in the cytoplasm. It carries out the reaction tRNA(Glu) + L-glutamate + ATP = L-glutamyl-tRNA(Glu) + AMP + diphosphate. Functionally, catalyzes the attachment of glutamate to tRNA(Glu) in a two-step reaction: glutamate is first activated by ATP to form Glu-AMP and then transferred to the acceptor end of tRNA(Glu). The chain is Glutamate--tRNA ligase from Cupriavidus taiwanensis (strain DSM 17343 / BCRC 17206 / CCUG 44338 / CIP 107171 / LMG 19424 / R1) (Ralstonia taiwanensis (strain LMG 19424)).